The sequence spans 247 residues: GTP cyclohydrolase 1 type 2 homolog (247 aa).

Residues histidine 63, histidine 64, aspartate 101, histidine 215, and glutamate 219 each coordinate a divalent metal cation.

This sequence belongs to the GTP cyclohydrolase I type 2/NIF3 family. Homohexamer.

This is GTP cyclohydrolase 1 type 2 homolog from Buchnera aphidicola subsp. Acyrthosiphon pisum (strain APS) (Acyrthosiphon pisum symbiotic bacterium).